Reading from the N-terminus, the 141-residue chain is MTVKVDKNYEQLLDRLYDRLPDKAQKSGQQNLPNLIVLQVGNTTIIRNFSEYCDRIRREDKLCMRYLLKELAAPGSLGENGQLVIQGKFSSQVVTMLMERFLKMYVQCSTCRSFDTILKRDKKVWIISCLACGAQTPVKQF.

This sequence belongs to the eIF-2-beta/eIF-5 family. Heterotrimer composed of an alpha, a beta and a gamma chain.

In terms of biological role, eIF-2 functions in the early steps of protein synthesis by forming a ternary complex with GTP and initiator tRNA. This is Translation initiation factor 2 subunit beta from Sulfolobus acidocaldarius (strain ATCC 33909 / DSM 639 / JCM 8929 / NBRC 15157 / NCIMB 11770).